The sequence spans 398 residues: Exodeoxyribonuclease 7 large subunit (398 aa).

The protein belongs to the XseA family. In terms of assembly, heterooligomer composed of large and small subunits.

It localises to the cytoplasm. The catalysed reaction is Exonucleolytic cleavage in either 5'- to 3'- or 3'- to 5'-direction to yield nucleoside 5'-phosphates.. Bidirectionally degrades single-stranded DNA into large acid-insoluble oligonucleotides, which are then degraded further into small acid-soluble oligonucleotides. The sequence is that of Exodeoxyribonuclease 7 large subunit from Chlorobaculum tepidum (strain ATCC 49652 / DSM 12025 / NBRC 103806 / TLS) (Chlorobium tepidum).